We begin with the raw amino-acid sequence, 406 residues long: Dual-specificity RNA methyltransferase RlmN (406 aa).

The active-site Proton acceptor is the Glu121. The Radical SAM core domain maps to 127–377 (ERDRGTLCVS…VRTPRGRDIL (251 aa)). Residues Cys134 and Cys380 are joined by a disulfide bond. Positions 141, 145, and 148 each coordinate [4Fe-4S] cluster. S-adenosyl-L-methionine is bound by residues 206 to 207 (GE), Ser238, 260 to 262 (SLH), and Asn337. Cys380 acts as the S-methylcysteine intermediate in catalysis.

This sequence belongs to the radical SAM superfamily. RlmN family. [4Fe-4S] cluster is required as a cofactor.

The protein resides in the cytoplasm. The enzyme catalyses adenosine(2503) in 23S rRNA + 2 reduced [2Fe-2S]-[ferredoxin] + 2 S-adenosyl-L-methionine = 2-methyladenosine(2503) in 23S rRNA + 5'-deoxyadenosine + L-methionine + 2 oxidized [2Fe-2S]-[ferredoxin] + S-adenosyl-L-homocysteine. The catalysed reaction is adenosine(37) in tRNA + 2 reduced [2Fe-2S]-[ferredoxin] + 2 S-adenosyl-L-methionine = 2-methyladenosine(37) in tRNA + 5'-deoxyadenosine + L-methionine + 2 oxidized [2Fe-2S]-[ferredoxin] + S-adenosyl-L-homocysteine. In terms of biological role, specifically methylates position 2 of adenine 2503 in 23S rRNA and position 2 of adenine 37 in tRNAs. m2A2503 modification seems to play a crucial role in the proofreading step occurring at the peptidyl transferase center and thus would serve to optimize ribosomal fidelity. This chain is Dual-specificity RNA methyltransferase RlmN, found in Azorhizobium caulinodans (strain ATCC 43989 / DSM 5975 / JCM 20966 / LMG 6465 / NBRC 14845 / NCIMB 13405 / ORS 571).